Reading from the N-terminus, the 393-residue chain is Upstream-binding factor 1-like protein 1 (393 aa).

2 consecutive DNA-binding regions (HMG box) follow at residues 100-168 and 222-288; these read PKRP…ARFR and QKPP…DLWL. The interval 308 to 393 is disordered; sequence KNMAMTGGPD…SSGEEIEVDV (86 aa). Residues 365-377 show a composition bias toward basic and acidic residues; the sequence is EENRKKDREKEES.

It is found in the cytoplasm. Its subcellular location is the nucleus. Essential for proliferation of the inner cell mass and trophectodermal cells in peri-implantation development. The sequence is that of Upstream-binding factor 1-like protein 1 from Homo sapiens (Human).